A 366-amino-acid polypeptide reads, in one-letter code: tRNA/tmRNA (uracil-C(5))-methyltransferase (366 aa).

The S-adenosyl-L-methionine site is built by Gln190, Tyr218, Asn223, Glu239, and Asp299. Cys324 (nucleophile) is an active-site residue. Glu358 (proton acceptor) is an active-site residue.

It belongs to the class I-like SAM-binding methyltransferase superfamily. RNA M5U methyltransferase family. TrmA subfamily.

It carries out the reaction uridine(54) in tRNA + S-adenosyl-L-methionine = 5-methyluridine(54) in tRNA + S-adenosyl-L-homocysteine + H(+). The enzyme catalyses uridine(341) in tmRNA + S-adenosyl-L-methionine = 5-methyluridine(341) in tmRNA + S-adenosyl-L-homocysteine + H(+). In terms of biological role, dual-specificity methyltransferase that catalyzes the formation of 5-methyluridine at position 54 (m5U54) in all tRNAs, and that of position 341 (m5U341) in tmRNA (transfer-mRNA). This is tRNA/tmRNA (uracil-C(5))-methyltransferase from Shigella boydii serotype 18 (strain CDC 3083-94 / BS512).